The sequence spans 201 residues: Alpha-1-acid glycoprotein 1 (201 aa).

The signal sequence occupies residues 1-18 (MALSWVLTVLSLLPLLEA). Pyrrolidone carboxylic acid is present on glutamine 19. 2 disulfide bridges follow: cysteine 23/cysteine 165 and cysteine 90/cysteine 183. Asparagine 33 is a glycosylation site (N-linked (GlcNAc...) (complex) asparagine). N-linked (GlcNAc...) asparagine glycosylation occurs at asparagine 56. Residue asparagine 72 is glycosylated (N-linked (GlcNAc...) (complex) asparagine). N-linked (GlcNAc...) asparagine glycans are attached at residues asparagine 93 and asparagine 103.

Belongs to the calycin superfamily. Lipocalin family. In terms of processing, N-glycosylated. N-glycan heterogeneity at Asn-33: Hex5HexNAc4 (minor), Hex6HexNAc5 (major) and dHex1Hex6HexNAc5 (minor). In terms of tissue distribution, expressed by the liver and secreted in plasma.

It is found in the secreted. In terms of biological role, functions as a transport protein in the blood stream. Binds various ligands in the interior of its beta-barrel domain. Also binds synthetic drugs and influences their distribution and availability in the body. Appears to function in modulating the activity of the immune system during the acute-phase reaction. The polypeptide is Alpha-1-acid glycoprotein 1 (ORM1) (Homo sapiens (Human)).